The primary structure comprises 1216 residues: MPWLSGGRRRRRGQPREAPREPPPSAQPQREPPPAPPAAVPTPPAPSAPPPRARESAELPLPAGWEEARDYDGRVFYIDHNTRQTSWIDPRDRITKPLTFADCVGDELPLGWETVYDKQIGVYYMDHINKLTQIEDPREQWRREQERMLKEYLIVAQEALNAKKEIYQIKQQRFELAQEEYQQLHKMCEDDSRSYASSFSGYSTNTKYDPHQIKAEIASRRDRLSRLKRELTQMKQELQYKEKGVETLQEIDRKMSSTHTSYKLDEAQAIMSELRTIKKAICTGEKERRDLMHSLAKLTDSFKNSCSVTDSLVDFPHHVGVPGDAGVPQQFCDAGSQTDIIGEFVFDDKTRLVDRVRLNWQYEEARKRVANIQQQLARLDNESWPSTAEADRDRLQLIKEKEALLQELQLIIAQRRSAGDVARLEEERERLEEELRRARATSAQGATERILLQEKRNCLLMQLEEATRLTSYLQSQLKSLCASTLTVSSGSSRGSLASSRGSLASSRGSLSSVSFTDIYGLPQYEKPDAEGSQLLRFDLIPFDSLGRDAPFSEPPGPSGFHKQRRSLDTPQSLASLSSRSSLSSLSPPSSPLDTPFLPASRDSPLAQLADSCEGPGLGALDRLRAHASAMGDEDLPGMAALQPHGVPGDGEGPHERGPPPASAPVGGTVTLREDSAKRLERRARRISACLSDYSLASDSGVFEPLTKRNEDAEEPAYGDTASNGDPQIHVGLLRDSGSECLLVHVLQLKNPAGLAVKEDCKVHIRVYLPPLDSGTPNTYCSKALEFQVPLVFNEVFRIPVHSSALTLKSLQLYVCSVTPQLQEELLGIAQINLADYDSLSEMQLRWHSVQVFTSSEPSRTREAGCAGESSARDPAHTISISGKTDAVTVLLARTTAQLQAVERELAEERAKLEYTEEEVLEMERKEEQAEAISERSWQADSVDSGCSNCTQTSPPYPEPCCMGIDSILGHPFAAQAGPYSPEKFQPSPLKVDKETNTEDLFLEEAASLVKERPSRRARGSPFVRSGTIVRSQTFSPGARSQYVCRLYRSDSDSSTLPRKSPFVRNTLERRTLRYKQSCRSSLAELMARTSLDLELDLQASRTRQRQLNEELCALRELRQRLEDAQLRGQTDLPPWVLRDERLRGLLREAERQTRQTKLDYRHEQAAEKMLKKASKEIYQLRGQSHKEPIQVQTFREKIAFFTRPRINIPPLPADDV.

Positions 1–63 (MPWLSGGRRR…RESAELPLPA (63 aa)) are disordered. Residues 21–51 (EPPPSAQPQREPPPAPPAAVPTPPAPSAPPP) are compositionally biased toward pro residues. 2 WW domains span residues 59 to 92 (LPLP…DPRD) and 106 to 139 (DELP…DPRE). 2 coiled-coil regions span residues 164 to 250 (KEIY…TLQE) and 354 to 468 (DRVR…EATR). Disordered stretches follow at residues 487–508 (VSSG…SSRG), 546–612 (GRDA…ADSC), and 634–668 (DLPG…VGGT). The span at 570–598 (PQSLASLSSRSSLSSLSPPSSPLDTPFLP) shows a compositional bias: low complexity. Positions 722 to 847 (SNGDPQIHVG…SLSEMQLRWH (126 aa)) constitute a C2 domain. Residues 885 to 936 (DAVTVLLARTTAQLQAVERELAEERAKLEYTEEEVLEMERKEEQAEAISERS) are a coiled coil. The interval 1060–1079 (SPFVRNTLERRTLRYKQSCR) is interaction with PRKCZ. Positions 1091–1160 (LDLELDLQAS…RQTRQTKLDY (70 aa)) form a coiled coil.

The protein belongs to the WWC family. As to quaternary structure, forms homodimers and heterodimers with WWC1 and WWC2. Interacts with DLC1 and PRKCZ. Interacts (via WW domains) with LATS1 and LATS2.

It is found in the cytoplasm. The protein resides in the cytosol. Regulator of the Hippo signaling pathway, also known as the Salvador-Warts-Hippo (SWH) pathway. Enhances phosphorylation of LATS1 and YAP1 and negatively regulates cell proliferation and organ growth due to a suppression of the transcriptional activity of YAP1, the major effector of the Hippo pathway. This chain is Protein WWC3, found in Homo sapiens (Human).